The sequence spans 165 residues: MPPKFDPNEVKVVYLRCTGGEVGATSALAPKIGPLGLSPKKVGDDIAKATGDWKGLRITVKLTIQNRQAQIEVVPSASALIIKALKEPPRDRKKQKNIKHSGNITFDEIVNIARQMRHRSLARELSGTIKEILGTAQSVGCNVDGRHPHDIIDDINSGAVECPAS.

Serine 38 is modified (phosphoserine). A Glycyl lysine isopeptide (Lys-Gly) (interchain with G-Cter in SUMO2) cross-link involves residue lysine 40. Residue lysine 48 forms a Glycyl lysine isopeptide (Lys-Gly) (interchain with G-Cter in ubiquitin) linkage. Position 54 is an N6-acetyllysine (lysine 54). Lysine 83 participates in a covalent cross-link: Glycyl lysine isopeptide (Lys-Gly) (interchain with G-Cter in ubiquitin). At serine 165 the chain carries Phosphoserine.

Belongs to the universal ribosomal protein uL11 family. In terms of assembly, component of the large ribosomal subunit. Mature ribosomes consist of a small (40S) and a large (60S) subunit. The 40S subunit contains about 33 different proteins and 1 molecule of RNA (18S). The 60S subunit contains about 49 different proteins and 3 molecules of RNA (28S, 5.8S and 5S). Ubiquitinated at Lys-48 and Lys-83 by RNF14 and RNF25 in response to ribosome collisions (ribosome stalling).

The protein resides in the cytoplasm. Its function is as follows. Component of the large ribosomal subunit. The ribosome is a large ribonucleoprotein complex responsible for the synthesis of proteins in the cell. Binds directly to 26S ribosomal RNA. This chain is Large ribosomal subunit protein uL11 (Rpl12), found in Mus musculus (Mouse).